A 505-amino-acid polypeptide reads, in one-letter code: Tyrosine-protein kinase FRK (505 aa).

Phosphoserine occurs at positions 37 and 40. In terms of domain architecture, SH3 spans 42–110 (RHGHYFVALF…PSNYVAEDRS (69 aa)). Residues 116-208 (WFFGAIGRSD…GLCVKLGKPC (93 aa)) enclose the SH2 domain. Threonine 178 carries the post-translational modification Phosphothreonine. Positions 234–491 (IQLLKRLGSG…TLRWKLEDYF (258 aa)) constitute a Protein kinase domain. ATP contacts are provided by residues 240 to 248 (LGSGQFGEV) and lysine 262. Aspartate 354 functions as the Proton acceptor in the catalytic mechanism. At tyrosine 387 the chain carries Phosphotyrosine; by autocatalysis.

Belongs to the protein kinase superfamily. Tyr protein kinase family. SRC subfamily. In terms of assembly, interacts (via the SH3-domain) with PTEN. Interacts with RB1. As to expression, predominantly expressed in epithelial derived cell lines and tissues, especially normal liver, kidney, breast and colon.

The protein localises to the cytoplasm. The protein resides in the nucleus. The enzyme catalyses L-tyrosyl-[protein] + ATP = O-phospho-L-tyrosyl-[protein] + ADP + H(+). In terms of biological role, non-receptor tyrosine-protein kinase that negatively regulates cell proliferation. Positively regulates PTEN protein stability through phosphorylation of PTEN on 'Tyr-336', which in turn prevents its ubiquitination and degradation, possibly by reducing its binding to NEDD4. May function as a tumor suppressor. The chain is Tyrosine-protein kinase FRK (FRK) from Homo sapiens (Human).